Reading from the N-terminus, the 413-residue chain is Alpha-ketoglutarate-dependent xanthine dioxygenase xan1 (413 aa).

Positions Met-1–Thr-18 are enriched in low complexity. Residues Met-1–Pro-24 are disordered. Residues His-183 and Asp-185 each contribute to the Fe cation site. Residues Thr-228 and Trp-362 each contribute to the 2-oxoglutarate site. His-377 lines the Fe cation pocket. Arg-389 contributes to the 2-oxoglutarate binding site.

It belongs to the TfdA dioxygenase family. The cofactor is Fe(2+).

Its subcellular location is the cytoplasm. The protein localises to the cytosol. It carries out the reaction xanthine + 2-oxoglutarate + O2 = urate + succinate + CO2. In terms of biological role, alpha-ketoglutarate-dependent xanthine dioxygenase is a non-heme mononuclear Fe(2+) enzyme that decarboxylates alpha-ketoglutarate to succinate and CO(2) while hydroxylating xanthine to generate uric acid. Allows xanthine utilization as a nitrogen source. The polypeptide is Alpha-ketoglutarate-dependent xanthine dioxygenase xan1 (xan1) (Schizosaccharomyces pombe (strain 972 / ATCC 24843) (Fission yeast)).